The sequence spans 186 residues: MGKEIQLKPKANVSSYVHFLLNYRNKFKEQQPNTYVGFKEFSRKCSEKWRSISKHEKAKYEALAKLDKARYQEEMMNYVGKRKKRRKRDPQEPRRPPSSFLLFCQDHYAQLKRENPNWSVVQVAKATGKMWSTATDLEKHPYEQRVALLRAKYFEELELYRKQCNARKKYRMSARNRCRGKRVRQS.

2 DNA-binding regions (HMG box) span residues 9-79 (PKAN…MNYV) and 93-161 (PRRP…ELYR). Positions 77–98 (NYVGKRKKRRKRDPQEPRRPPS) are disordered.

It belongs to the HMGB family.

The protein resides in the nucleus. Its subcellular location is the chromosome. The sequence is that of High mobility group protein B4 (HMGB4) from Homo sapiens (Human).